The chain runs to 511 residues: Sodium/proline symporter (511 aa).

A run of 13 helical transmembrane segments spans residues 16–36, 53–73, 84–104, 138–158, 173–193, 199–219, 239–259, 285–305, 326–346, 380–400, 409–429, 437–457, and 466–486; these read WQTY…AFTY, IGPY…WMIM, LSAM…YFVV, IISG…GFVS, FGLI…GYLA, FFQG…AMMN, LFKG…LGYF, ISWM…GIAF, VLFH…AIMS, FVMI…AIAW, LVGN…LFAL, AGAV…IAWI, and IFGL…TYVV.

It belongs to the sodium:solute symporter (SSF) (TC 2.A.21) family.

The protein localises to the cell membrane. It catalyses the reaction L-proline(in) + Na(+)(in) = L-proline(out) + Na(+)(out). Functionally, catalyzes the sodium-dependent uptake of extracellular L-proline. Since most S.aureus strains are L-proline auxotrophs, this transporter may aid the bacterial persistence during an infection of tissues with low proline concentrations. The polypeptide is Sodium/proline symporter (Staphylococcus aureus).